The primary structure comprises 115 residues: U3-lycotoxin-Ls1c (115 aa).

A signal peptide spans 1–20 (MKFVLLFGVLLVTLFSYSSA). The propeptide occupies 21–44 (EMLDDFDQADEDELLSLIEKEEAR). Disulfide bonds link C48/C63, C55/C72, C62/C87, and C74/C85.

This sequence belongs to the neurotoxin 19 (CSTX) family. 01 subfamily. Expressed by the venom gland.

It is found in the secreted. In Lycosa singoriensis (Wolf spider), this protein is U3-lycotoxin-Ls1c.